The following is an 83-amino-acid chain: ATP synthase subunit c (83 aa).

2 helical membrane-spanning segments follow: residues 10–30 and 52–72; these read IAVA…FGLL and MFIV…IALY.

It belongs to the ATPase C chain family. F-type ATPases have 2 components, F(1) - the catalytic core - and F(0) - the membrane proton channel. F(1) has five subunits: alpha(3), beta(3), gamma(1), delta(1), epsilon(1). F(0) has three main subunits: a(1), b(2) and c(10-14). The alpha and beta chains form an alternating ring which encloses part of the gamma chain. F(1) is attached to F(0) by a central stalk formed by the gamma and epsilon chains, while a peripheral stalk is formed by the delta and b chains.

It localises to the cell inner membrane. Its function is as follows. F(1)F(0) ATP synthase produces ATP from ADP in the presence of a proton or sodium gradient. F-type ATPases consist of two structural domains, F(1) containing the extramembraneous catalytic core and F(0) containing the membrane proton channel, linked together by a central stalk and a peripheral stalk. During catalysis, ATP synthesis in the catalytic domain of F(1) is coupled via a rotary mechanism of the central stalk subunits to proton translocation. In terms of biological role, key component of the F(0) channel; it plays a direct role in translocation across the membrane. A homomeric c-ring of between 10-14 subunits forms the central stalk rotor element with the F(1) delta and epsilon subunits. The protein is ATP synthase subunit c of Shewanella denitrificans (strain OS217 / ATCC BAA-1090 / DSM 15013).